A 169-amino-acid polypeptide reads, in one-letter code: Ribosome maturation factor RimM (169 aa).

Residues 96–169 (DGEYYWADLI…RILVDWGLDY (74 aa)) enclose the PRC barrel domain.

It belongs to the RimM family. In terms of assembly, binds ribosomal protein uS19.

The protein localises to the cytoplasm. In terms of biological role, an accessory protein needed during the final step in the assembly of 30S ribosomal subunit, possibly for assembly of the head region. Essential for efficient processing of 16S rRNA. May be needed both before and after RbfA during the maturation of 16S rRNA. It has affinity for free ribosomal 30S subunits but not for 70S ribosomes. The chain is Ribosome maturation factor RimM from Chromobacterium violaceum (strain ATCC 12472 / DSM 30191 / JCM 1249 / CCUG 213 / NBRC 12614 / NCIMB 9131 / NCTC 9757 / MK).